The sequence spans 1170 residues: Anion exchange protein 3 (1170 aa).

The Cytoplasmic portion of the chain corresponds to 1 to 656 (MGRSYNEKDF…DLKDALDTQC (656 aa)). Disordered stretches follow at residues 17-96 (FHHT…PQLS), 112-167 (FHME…TTRG), and 239-267 (HLVKKSSRCQLPRSSNGSPPLSSLKRRKR). Basic residues predominate over residues 32-53 (RFRKRVLSMDRRRKRKRKKKKT). The span at 67–76 (VDEEEAESEI) shows a compositional bias: acidic residues. Polar residues predominate over residues 246–259 (RCQLPRSSNGSPPL). The next 5 helical transmembrane spans lie at 657 to 677 (IAAVIFIYFAALSPTITFGGL), 702 to 722 (FSLLAGQPLLIIGFSGPLLVF), 744 to 764 (IGFWLIFIVLVIVAAEGSFLV), 774 to 794 (IFAFLISLIFIYETFSKLIKV), and 828 to 848 (PNTALLSMVLMMGTFFTAFFL). The tract at residues 657–1170 (IAAVIFIYFA…DEYNEIHMLV (514 aa)) is membrane (anion exchange). The Cytoplasmic segment spans residues 849-863 (RKLRNSRFLGGKVRR). The next 5 membrane-spanning stretches (helical) occupy residues 864–884 (VIGDFGIPISILISVLVDILI), 919–939 (FPVWMMGASVIPALLVFILIF), 966–986 (LLLIVTLGAICPLFGLPWLTA), 1020–1063 (RVTG…LTGI), and 1104–1124 (IVLLWVVKSTVASLAFPFILI).

This sequence belongs to the anion exchanger (TC 2.A.31) family. As to expression, widely expressed at low levels.

Its subcellular location is the cell membrane. The catalysed reaction is hydrogencarbonate(in) + chloride(out) = hydrogencarbonate(out) + chloride(in). Sodium-independent anion exchanger which mediates the electroneutral exchange of chloride for bicarbonate ions across the cell membrane. May be involved in the regulation of intracellular pH, and the modulation of cardiac action potential. The protein is Anion exchange protein 3 of Danio rerio (Zebrafish).